Consider the following 460-residue polypeptide: tRNA modification GTPase MnmE (460 aa).

(6S)-5-formyl-5,6,7,8-tetrahydrofolate is bound by residues Arg29, Glu91, and Lys132. Residues 227 to 383 (GISIALIGKT…LIDTIIKKCG (157 aa)) enclose the TrmE-type G domain. Asn237 contributes to the K(+) binding site. Residues 237 to 242 (NVGKSS), 256 to 262 (TNIPGTT), and 281 to 284 (DTAG) each bind GTP. A Mg(2+)-binding site is contributed by Ser241. 3 residues coordinate K(+): Thr256, Ile258, and Thr261. A Mg(2+)-binding site is contributed by Thr262. (6S)-5-formyl-5,6,7,8-tetrahydrofolate is bound at residue Lys460.

It belongs to the TRAFAC class TrmE-Era-EngA-EngB-Septin-like GTPase superfamily. TrmE GTPase family. As to quaternary structure, homodimer. Heterotetramer of two MnmE and two MnmG subunits. K(+) serves as cofactor.

It is found in the cytoplasm. Its function is as follows. Exhibits a very high intrinsic GTPase hydrolysis rate. Involved in the addition of a carboxymethylaminomethyl (cmnm) group at the wobble position (U34) of certain tRNAs, forming tRNA-cmnm(5)s(2)U34. The chain is tRNA modification GTPase MnmE from Prochlorococcus marinus (strain MIT 9215).